The sequence spans 456 residues: 1,3-beta-glucanosyltransferase gas4 (456 aa).

A signal peptide spans 1–25 (MGVANIIYALFLLGPSIFLKATAQT). Cys68 and Cys97 are oxidised to a cystine. 5 residues coordinate (1,3-beta-D-glucosyl)n: Tyr86, Asn156, Glu157, Asp197, and Arg202. The Proton donor role is filled by Glu157. Cystine bridges form between Cys211/Cys350 and Cys229/Cys260. Asn248 is a glycosylation site (N-linked (GlcNAc...) asparagine). Glu257 functions as the Nucleophile in the catalytic mechanism. Tyr296 provides a ligand contact to (1,3-beta-D-glucosyl)n. 2 disordered regions span residues 334-353 (NPKG…CPAN) and 384-434 (IEGP…ESGS). Asn353 and Asn415 each carry an N-linked (GlcNAc...) asparagine glycan. Over residues 417–434 (TSTTSYTSGMTSSSESGS) the composition is skewed to low complexity. Ser432 is lipidated: GPI-anchor amidated serine. Positions 433-456 (GSSKIGVAFCQALFITVLIATLSF) are cleaved as a propeptide — removed in mature form.

The protein belongs to the glycosyl hydrolase 72 family.

It is found in the cell membrane. Splits internally a 1,3-beta-glucan molecule and transfers the newly generated reducing end (the donor) to the non-reducing end of another 1,3-beta-glucan molecule (the acceptor) forming a 1,3-beta linkage, resulting in the elongation of 1,3-beta-glucan chains in the cell wall. Involved in spore wall assembly. The protein is 1,3-beta-glucanosyltransferase gas4 (gas4) of Schizosaccharomyces pombe (strain 972 / ATCC 24843) (Fission yeast).